The sequence spans 61 residues: Large ribosomal subunit protein bL32 (61 aa).

Basic residues predominate over residues 1–10 (MAQPKKKTSN). The interval 1-23 (MAQPKKKTSNAKRDQRRATWKRK) is disordered.

The protein belongs to the bacterial ribosomal protein bL32 family.

This is Large ribosomal subunit protein bL32 from Gloeobacter violaceus (strain ATCC 29082 / PCC 7421).